The sequence spans 460 residues: Sexual development regulator velC (460 aa).

3 disordered regions span residues 67–131 (VGPD…PQAP), 152–216 (YAPR…RPDP), and 422–460 (KKGN…SARQ). Polar residues predominate over residues 192–207 (PVTTNGRPPDSNSPMV). The Velvet domain maps to 239–422 (LSDNRFNLQI…KEQGCIISIK (184 aa)). Over residues 423 to 437 (KGNDRSKNTRSHDDS) the composition is skewed to basic and acidic residues. The span at 451–460 (GKRRRRSARQ) shows a compositional bias: basic residues.

It belongs to the velvet family. VelC subfamily. Interacts with VE1.

Its subcellular location is the nucleus. Functionally, velvet-domain-containing protein that acts as a positive regulator of sexual development. Dispensable for regulation of conidial size, hyphal hydrophobicity, fumonisin production, and oxidant resistance. This chain is Sexual development regulator velC, found in Gibberella moniliformis (strain M3125 / FGSC 7600) (Maize ear and stalk rot fungus).